The sequence spans 345 residues: Trace amine-associated receptor 6 (345 aa).

Residues methionine 1–arginine 32 are Extracellular-facing. Asparagine 17 carries N-linked (GlcNAc...) asparagine glycosylation. 2 disulfides stabilise this stretch: cysteine 22/cysteine 186 and cysteine 105/cysteine 190. A helical membrane pass occupies residues valine 33–valine 53. At methionine 54–asparagine 68 the chain is on the cytoplasmic side. A helical transmembrane segment spans residues phenylalanine 69–serine 89. Over methionine 90–phenylalanine 107 the chain is Extracellular. Residues histidine 108–isoleucine 128 traverse the membrane as a helical segment. The Cytoplasmic segment spans residues aspartate 129–serine 147. A helical transmembrane segment spans residues valine 148–phenylalanine 168. At tyrosine 169–aspartate 202 the chain is on the extracellular side. An extracellular Loop 2 (ECL2) region spans residues aspartate 174–valine 187. A helical membrane pass occupies residues phenylalanine 203–valine 223. The Cytoplasmic segment spans residues alanine 224–threonine 259. Residues leucine 260–isoleucine 276 form a helical membrane-spanning segment. The Extracellular segment spans residues aspartate 277 to alanine 282. The chain crosses the membrane as a helical span at residues phenylalanine 283–tyrosine 302. At asparagine 303 to isoleucine 345 the chain is on the cytoplasmic side.

It belongs to the G-protein coupled receptor 1 family. Specifically expressed in neurons of the olfactory epithelium, to discrete glomeruli predominantly localized to a confined bulb region. Present in a ventral area of the main olfactory epithelium.

The protein resides in the cell membrane. Olfactory receptor specific for trace amines, such as beta-phenylethylamine (beta-PEA). Trace amine compounds are enriched in animal body fluids and act on trace amine-associated receptors (TAARs) to elicit both intraspecific and interspecific innate behaviors. Beta-PEA-binding causes a conformation change that triggers signaling via G(s)-class of G alpha proteins (GNAL or GNAS). The sequence is that of Trace amine-associated receptor 6 from Mus musculus (Mouse).